The chain runs to 106 residues: Small membrane A-kinase anchor protein (106 aa).

Gly-2 carries N-myristoyl glycine lipidation. Residue Cys-3 is the site of S-palmitoyl cysteine attachment. The residue at position 40 (Ser-40) is a Phosphoserine. A PKA-RI-binding region spans residues 62 to 85; sequence ALILEFADRLASEIVEDALQQWAC. Phosphoserine is present on Ser-98.

It belongs to the small membrane AKAP family. In terms of assembly, interacts with PKA type I regulatory subunits PRKAR1A and PRKAR1B. Also binds to type II regulatory subunits, but at a tenfold lower affinity. May be palmitoylated at Cys-3. As to expression, widely expressed, with very low levels in spleen and liver.

The protein resides in the cell membrane. Binds to type I regulatory subunits of protein kinase A (PKA-RI) and may anchor/target them to the plasma membrane. This Mus musculus (Mouse) protein is Small membrane A-kinase anchor protein.